The sequence spans 453 residues: UDP-glycosyltransferase 74E2 (453 aa).

His17 functions as the Proton acceptor in the catalytic mechanism. His17 is a binding site for an anthocyanidin. The active-site Charge relay is the Asp109. The UDP-alpha-D-glucose site is built by Thr131, Gln334, His349, Trp352, Asn353, Ser354, Glu357, Asp373, and Gln374.

It belongs to the UDP-glycosyltransferase family. Expressed in roots, cotyledons and leaf hydathodes.

The catalysed reaction is (indol-3-yl)butanoate + UDP-alpha-D-glucose = 4-(indol-3-yl)butanoyl-beta-D-glucose + UDP. Its function is as follows. Glucosyltransferase that acts on the auxin indole-3-butyric acid (IBA). Mediates abiotic stress responses and stress-induced morphological adaptations by regulating auxin homeostasis. Possesses low activity in vitro on jasmonate (JA) and the synthetic auxin analog naphthaleneacetic acid (NAA). The polypeptide is UDP-glycosyltransferase 74E2 (UGT74E2) (Arabidopsis thaliana (Mouse-ear cress)).